The following is a 324-amino-acid chain: Beta-ketoacyl-[acyl-carrier-protein] synthase III (324 aa).

Residue C112 is part of the active site. Residues 181–202 (TDGSRGQNLTSGNNPLRSPFSD) form a disordered region. The span at 184-196 (SRGQNLTSGNNPL) shows a compositional bias: polar residues. Residue H249 is part of the active site. Positions 250 to 254 (QANRR) are ACP-binding. N279 is a catalytic residue.

This sequence belongs to the thiolase-like superfamily. FabH family. Homodimer.

The protein resides in the cytoplasm. The enzyme catalyses malonyl-[ACP] + acetyl-CoA + H(+) = 3-oxobutanoyl-[ACP] + CO2 + CoA. It functions in the pathway lipid metabolism; fatty acid biosynthesis. In terms of biological role, catalyzes the condensation reaction of fatty acid synthesis by the addition to an acyl acceptor of two carbons from malonyl-ACP. Catalyzes the first condensation reaction which initiates fatty acid synthesis and may therefore play a role in governing the total rate of fatty acid production. Possesses both acetoacetyl-ACP synthase and acetyl transacylase activities. Its substrate specificity determines the biosynthesis of branched-chain and/or straight-chain of fatty acids. The sequence is that of Beta-ketoacyl-[acyl-carrier-protein] synthase III from Streptococcus uberis (strain ATCC BAA-854 / 0140J).